The sequence spans 452 residues: Protein FAM222A (452 aa).

It belongs to the FAM222 family.

The polypeptide is Protein FAM222A (FAM222A) (Homo sapiens (Human)).